Consider the following 501-residue polypeptide: Lysine--tRNA ligase (501 aa).

The Mg(2+) site is built by glutamate 411 and glutamate 418.

It belongs to the class-II aminoacyl-tRNA synthetase family. As to quaternary structure, homodimer. Mg(2+) serves as cofactor.

The protein localises to the cytoplasm. It carries out the reaction tRNA(Lys) + L-lysine + ATP = L-lysyl-tRNA(Lys) + AMP + diphosphate. The chain is Lysine--tRNA ligase from Pseudomonas aeruginosa (strain ATCC 15692 / DSM 22644 / CIP 104116 / JCM 14847 / LMG 12228 / 1C / PRS 101 / PAO1).